Reading from the N-terminus, the 261-residue chain is Zinc import ATP-binding protein ZnuC (261 aa).

An ABC transporter domain is found at Ile6–Asn221. Gly38–Thr45 lines the ATP pocket.

Belongs to the ABC transporter superfamily. Zinc importer (TC 3.A.1.15.5) family. As to quaternary structure, the complex is composed of two ATP-binding proteins (ZnuC), two transmembrane proteins (ZnuB) and a solute-binding protein (ZnuA).

The protein localises to the cell inner membrane. The catalysed reaction is Zn(2+)(out) + ATP(in) + H2O(in) = Zn(2+)(in) + ADP(in) + phosphate(in) + H(+)(in). Part of the ABC transporter complex ZnuABC involved in zinc import. Responsible for energy coupling to the transport system. The polypeptide is Zinc import ATP-binding protein ZnuC (Pseudomonas fluorescens (strain Pf0-1)).